A 619-amino-acid polypeptide reads, in one-letter code: Dihydroxy-acid dehydratase (619 aa).

Asp-81 is a binding site for Mg(2+). Cys-122 is a binding site for [2Fe-2S] cluster. Asp-123 and Lys-124 together coordinate Mg(2+). At Lys-124 the chain carries N6-carboxylysine. Cys-195 provides a ligand contact to [2Fe-2S] cluster. Glu-494 provides a ligand contact to Mg(2+). The Proton acceptor role is filled by Ser-520.

The protein belongs to the IlvD/Edd family. Homodimer. The cofactor is [2Fe-2S] cluster. Mg(2+) is required as a cofactor.

It carries out the reaction (2R)-2,3-dihydroxy-3-methylbutanoate = 3-methyl-2-oxobutanoate + H2O. It catalyses the reaction (2R,3R)-2,3-dihydroxy-3-methylpentanoate = (S)-3-methyl-2-oxopentanoate + H2O. The protein operates within amino-acid biosynthesis; L-isoleucine biosynthesis; L-isoleucine from 2-oxobutanoate: step 3/4. Its pathway is amino-acid biosynthesis; L-valine biosynthesis; L-valine from pyruvate: step 3/4. Its function is as follows. Functions in the biosynthesis of branched-chain amino acids. Catalyzes the dehydration of (2R,3R)-2,3-dihydroxy-3-methylpentanoate (2,3-dihydroxy-3-methylvalerate) into 2-oxo-3-methylpentanoate (2-oxo-3-methylvalerate) and of (2R)-2,3-dihydroxy-3-methylbutanoate (2,3-dihydroxyisovalerate) into 2-oxo-3-methylbutanoate (2-oxoisovalerate), the penultimate precursor to L-isoleucine and L-valine, respectively. The polypeptide is Dihydroxy-acid dehydratase (Shewanella sp. (strain ANA-3)).